A 517-amino-acid polypeptide reads, in one-letter code: Serine O-succinyltransferase (517 aa).

The N-terminal 46 residues, 1–46 (MSPLNGVARSFPRPFQAVTRRPFRVVQPAIACPSNSRSFNHSRSLR), are a transit peptide targeting the mitochondrion. Positions 36–64 (SRSFNHSRSLRSTGSQSPAPSPRDSSNPA) are enriched in polar residues. The disordered stretch occupies residues 36–66 (SRSFNHSRSLRSTGSQSPAPSPRDSSNPALS). The region spanning 134 to 386 (NVILLHTGLS…LTQQLATKKQ (253 aa)) is the AB hydrolase-1 domain. An important for substrate specificity region spans residues 141-144 (GLSA). The active-site Nucleophile is the Ser238. Arg307 contributes to the substrate binding site. Residues 413–436 (QPYQEQPSASTSAEQSASASETGS) form a disordered region. The span at 416–436 (QEQPSASTSAEQSASASETGS) shows a compositional bias: low complexity. Catalysis depends on residues Asp461 and His498. Position 499 (Asp499) interacts with substrate.

The protein belongs to the AB hydrolase superfamily. MetX family.

It is found in the mitochondrion. The enzyme catalyses succinyl-CoA + L-serine = O-succinyl-L-serine + CoA. Its pathway is amino-acid biosynthesis; L-cysteine biosynthesis; L-cysteine from L-serine: step 1/2. Functionally, transfers a succinyl group from succinyl-CoA to L-serine, forming succinyl-L-serine. Also has weak serine acetyl transferase activity and homoserine succinyl transferase activity. In Emericella nidulans (strain FGSC A4 / ATCC 38163 / CBS 112.46 / NRRL 194 / M139) (Aspergillus nidulans), this protein is Serine O-succinyltransferase.